The sequence spans 663 residues: Putative ankyrin repeat protein R219 (663 aa).

ANK repeat units follow at residues 91–118 (FRIKKLHVQIMLKEYDKIEFLINSGYKV), 119–148 (DFDSLKLACLNGSLDILNLLLKFYQKKLSS), 200–229 (ANQQVMENAFKTNHTDIINLLLIRAKKDGT), 258–288 (DWHVELYYSALLSGSMEMITYLEDKIDKINP), and 322–351 (YFSHTMNYAIQSGSVNVVDYIWSRGYGITV).

This chain is Putative ankyrin repeat protein R219, found in Acanthamoeba polyphaga mimivirus (APMV).